The following is a 664-amino-acid chain: MSNRRETRKAAQDFIDNLKPLRRPNSEKIFIEGSRPDIQVGMRQIHQTDTRIVNTRGEETFEANPPIKVYDCAGPYSDPNADINVRRGLPKLREGWILARSDTEELNSASSNFTQQRLADDGLDHLRFDVLPKPRRAKAGKRVTQLHYARQGIITPEMEYIAIRENMARDEVTDEQLNRKKPGEAFGALVSKPITPEFVRDEVARGRAIIPANINHPEAEPMIIGRNFLVKVNANIGNSAVTSSIEEEVEKLVWSTRWGADTVMDLSTGRYIHETREWIVRNSPVPIGTVPIYQALEKVNGIAEDLNWEVFRDTLIEQAEQGVDYFTIHAGVLLRYVPMTAKRVTGIVSRGGSIMAKWCLSHHQENFLYTHFRDICELCAAYDVSLSLGDGMRPGSIADANDEAQFAELETLGELVKIAWEYDVQTIIEGPGHIPMQLIKENMDKQLEHCAEAPFYTLGPQTTDIAPGYDHFTSGIGAAMIAWYGCAMLCYVTPKEHLGLPNKEDVKQGLIAYKIAAHAADVAKGHPGAQIRDNALSKARFEFRWEDQYNLGLDPDTARAYHDETLPQESAKVAHFCSMCGPKFCSMKITQDVRDYAASLENAARSEADSVQTLEVGAAESYSKAESYARAGMDKMSATFKQTGSALYSETHVEAALSTEKEPV.

Residues Asn-235, Met-264, Tyr-293, His-329, 349–351 (SRG), 390–393 (DGMR), and Glu-429 contribute to the substrate site. Position 433 (His-433) interacts with Zn(2+). Tyr-456 serves as a coordination point for substrate. Residue His-497 participates in Zn(2+) binding. Residues Cys-577, Cys-580, and Cys-585 each coordinate [4Fe-4S] cluster.

It belongs to the ThiC family. Homodimer. The cofactor is [4Fe-4S] cluster.

It carries out the reaction 5-amino-1-(5-phospho-beta-D-ribosyl)imidazole + S-adenosyl-L-methionine = 4-amino-2-methyl-5-(phosphooxymethyl)pyrimidine + CO + 5'-deoxyadenosine + formate + L-methionine + 3 H(+). Its pathway is cofactor biosynthesis; thiamine diphosphate biosynthesis. Functionally, catalyzes the synthesis of the hydroxymethylpyrimidine phosphate (HMP-P) moiety of thiamine from aminoimidazole ribotide (AIR) in a radical S-adenosyl-L-methionine (SAM)-dependent reaction. This chain is Phosphomethylpyrimidine synthase, found in Shewanella amazonensis (strain ATCC BAA-1098 / SB2B).